Here is a 31-residue protein sequence, read N- to C-terminus: Gamma-conotoxin-like As7a (31 aa).

3 disulfides stabilise this stretch: Cys2–Cys16, Cys9–Cys20, and Cys15–Cys31. Glu14 bears the 4-carboxyglutamate mark.

Belongs to the conotoxin O1 superfamily. As to expression, expressed by the venom duct.

It is found in the secreted. Gamma-conotoxins may act on voltage-gated non-specific cation pacemaker channels (HCN). Elicits toxic effects in the freshwater snail Pomacea paludosa after intramuscular injection, but it has no effect when injected intracerebrally into mice. This chain is Gamma-conotoxin-like As7a, found in Conus cancellatus (Cancellate cone).